A 691-amino-acid polypeptide reads, in one-letter code: Amino-acid acetyltransferase, mitochondrial (691 aa).

Over residues 1 to 27 the composition is skewed to polar residues; that stretch reads MSSTSLAWPRTAKSSLLQSADFSSTSK. Disordered regions lie at residues 1-29 and 65-95; these read MSST…SKGY and RLKA…PSGV. Over residues 75 to 87 the composition is skewed to basic and acidic residues; the sequence is QVKEPEKESKDDA. An N-acetyltransferase domain is found at 512 to 681; that stretch reads NRPRMSLDDP…YEAVCRSIQP (170 aa).

This sequence belongs to the acetyltransferase family.

It localises to the mitochondrion. It carries out the reaction L-glutamate + acetyl-CoA = N-acetyl-L-glutamate + CoA + H(+). The protein operates within amino-acid biosynthesis; L-arginine biosynthesis; N(2)-acetyl-L-ornithine from L-glutamate: step 1/4. Its function is as follows. N-acetylglutamate synthase involved in arginine biosynthesis. In Aspergillus terreus (strain NIH 2624 / FGSC A1156), this protein is Amino-acid acetyltransferase, mitochondrial (arg2).